Here is a 473-residue protein sequence, read N- to C-terminus: Cysteine--tRNA ligase (473 aa).

Cys-28 contacts Zn(2+). The 'HIGH' region signature appears at 30–40 (PTVYNYIHIGN). The Zn(2+) site is built by Cys-210, His-235, and Glu-239. Residues 267–271 (KMSKS) carry the 'KMSKS' region motif. Lys-270 provides a ligand contact to ATP.

It belongs to the class-I aminoacyl-tRNA synthetase family. Monomer. Zn(2+) is required as a cofactor.

The protein resides in the cytoplasm. The enzyme catalyses tRNA(Cys) + L-cysteine + ATP = L-cysteinyl-tRNA(Cys) + AMP + diphosphate. This Fusobacterium nucleatum subsp. nucleatum (strain ATCC 25586 / DSM 15643 / BCRC 10681 / CIP 101130 / JCM 8532 / KCTC 2640 / LMG 13131 / VPI 4355) protein is Cysteine--tRNA ligase.